The chain runs to 869 residues: Serendipity locus protein H-1 (869 aa).

Residues 1 to 17 show a composition bias toward basic and acidic residues; sequence MEGGKGEGKRMKEEAPS. Disordered stretches follow at residues 1-32 and 134-165; these read MEGG…AGTP and FSVT…TPVK. Polar residues predominate over residues 146 to 164; that stretch reads AFTNSPFKKTSSSGTSTPV. C2H2-type zinc fingers lie at residues 269 to 293, 299 to 321, 331 to 352, 358 to 380, 386 to 408, 414 to 436, 442 to 464, and 470 to 493; these read HKCL…AAAH, YRCS…LKTH, KKCP…RKIH, YQCD…ARIH, YECP…QKYH, YRCE…NLVH, FACT…SNIH, and FKCN…RRRH. Disordered stretches follow at residues 554-573 and 617-652; these read TSTA…QPQQ and PKQT…SSLE. Positions 630–648 are enriched in low complexity; the sequence is APKQLQQKPQLLQQGQPQQ.

Distribution varies between nurse cells and the oocyte during oogenesis. Weakly expressed in follicle and border cells.

It is found in the nucleus. May belong to a complex set of multifingered proteins which play an important role in gene activation or regulation at early embryonic stages through a maximal accumulation of their transcripts (or protein product) in the mature oocyte. This is Serendipity locus protein H-1 (wdn) from Drosophila melanogaster (Fruit fly).